We begin with the raw amino-acid sequence, 186 residues long: Small ribosomal subunit protein uS5 (186 aa).

Residues 20–83 (FVDKLVHINR…EAAKRDMIFV (64 aa)) form the S5 DRBM domain.

Belongs to the universal ribosomal protein uS5 family. In terms of assembly, part of the 30S ribosomal subunit. Contacts proteins S4 and S8.

In terms of biological role, with S4 and S12 plays an important role in translational accuracy. Located at the back of the 30S subunit body where it stabilizes the conformation of the head with respect to the body. The sequence is that of Small ribosomal subunit protein uS5 from Brucella ovis (strain ATCC 25840 / 63/290 / NCTC 10512).